The primary structure comprises 436 residues: GTPase Der (436 aa).

EngA-type G domains lie at 3-168 (PLIA…PESD) and 177-352 (IRLA…QNRS). GTP contacts are provided by residues 9 to 16 (GRPNVGKS), 56 to 60 (DTGGY), 120 to 123 (NKAE), 183 to 190 (GRPNVGKS), 230 to 234 (DTAGL), and 295 to 298 (NKWD). Positions 353-436 (RKISTSALNR…VTISLRFMQK (84 aa)) constitute a KH-like domain.

It belongs to the TRAFAC class TrmE-Era-EngA-EngB-Septin-like GTPase superfamily. EngA (Der) GTPase family. Associates with the 50S ribosomal subunit.

In terms of biological role, GTPase that plays an essential role in the late steps of ribosome biogenesis. In Chlorobium luteolum (strain DSM 273 / BCRC 81028 / 2530) (Pelodictyon luteolum), this protein is GTPase Der.